The following is a 754-amino-acid chain: Zinc finger protein with KRAB and SCAN domains 7 (754 aa).

K28 participates in a covalent cross-link: Glycyl lysine isopeptide (Lys-Gly) (interchain with G-Cter in SUMO2). The region spanning 54–136 (RLHFRQLCYH…AVVEDFQRHL (83 aa)) is the SCAN box domain. A disordered region spans residues 157–215 (TALGTTKESPPTSPLSGGSAPGAHLEPPYDPGTHHLPSGDFAQCTSPVPTLPQVGNSGD). 2 stretches are compositionally biased toward polar residues: residues 158–172 (ALGT…SPLS) and 199–215 (QCTS…NSGD). One can recognise a KRAB domain in the interval 231–306 (VAYEDLSVDY…TSGGLFGVVP (76 aa)). 10 consecutive C2H2-type zinc fingers follow at residues 383–405 (YRCD…QRIH), 411–433 (YECN…LRTH), 439–461 (YECS…QRLH), 467–489 (YKCN…QRTH), 495–517 (YECN…QVLH), 523–545 (YKCN…QRIH), 551–573 (YECS…QSLH), 579–601 (YKCS…ERIH), 607–629 (FECS…QRLH), and 635–657 (YKCN…QRIH). The C2H2-type 11; degenerate zinc-finger motif lies at 663–685 (YECNECGKVFSYSSSLMVHQRTH). C2H2-type zinc fingers lie at residues 691–713 (YKCN…QRVH) and 719–741 (YECS…QRTH). The interval 735–754 (NHHQRTHTGEKSSGLAWSVS) is disordered.

This sequence belongs to the krueppel C2H2-type zinc-finger protein family.

It localises to the nucleus. May be involved in transcriptional regulation. The sequence is that of Zinc finger protein with KRAB and SCAN domains 7 (ZKSCAN7) from Homo sapiens (Human).